A 292-amino-acid chain; its full sequence is Phosphatidylglycerol--prolipoprotein diacylglyceryl transferase (292 aa).

The next 3 helical transmembrane spans lie at 18–38 (LFGV…GLLI), 67–87 (LLTW…VLFY), and 105–125 (GGMS…AFCL). R150 is an a 1,2-diacyl-sn-glycero-3-phospho-(1'-sn-glycerol) binding site. The next 3 helical transmembrane spans lie at 193–213 (QIYE…LLVW), 222–242 (GSVS…VEFV), and 266–286 (GLTM…YLIL).

It belongs to the Lgt family.

The protein localises to the cell inner membrane. It catalyses the reaction L-cysteinyl-[prolipoprotein] + a 1,2-diacyl-sn-glycero-3-phospho-(1'-sn-glycerol) = an S-1,2-diacyl-sn-glyceryl-L-cysteinyl-[prolipoprotein] + sn-glycerol 1-phosphate + H(+). It functions in the pathway protein modification; lipoprotein biosynthesis (diacylglyceryl transfer). Its function is as follows. Catalyzes the transfer of the diacylglyceryl group from phosphatidylglycerol to the sulfhydryl group of the N-terminal cysteine of a prolipoprotein, the first step in the formation of mature lipoproteins. The polypeptide is Phosphatidylglycerol--prolipoprotein diacylglyceryl transferase (Cereibacter sphaeroides (strain ATCC 17023 / DSM 158 / JCM 6121 / CCUG 31486 / LMG 2827 / NBRC 12203 / NCIMB 8253 / ATH 2.4.1.) (Rhodobacter sphaeroides)).